Reading from the N-terminus, the 232-residue chain is LexA repressor (232 aa).

Residues 26-46 (FDEMKDALDLRSKSGIHRLIT) constitute a DNA-binding region (H-T-H motif). Active-site for autocatalytic cleavage activity residues include S153 and K191.

It belongs to the peptidase S24 family. As to quaternary structure, homodimer.

The enzyme catalyses Hydrolysis of Ala-|-Gly bond in repressor LexA.. Functionally, represses a number of genes involved in the response to DNA damage (SOS response), including recA and lexA. In the presence of single-stranded DNA, RecA interacts with LexA causing an autocatalytic cleavage which disrupts the DNA-binding part of LexA, leading to derepression of the SOS regulon and eventually DNA repair. In Bradyrhizobium sp. (strain ORS 278), this protein is LexA repressor.